The chain runs to 195 residues: Imidazoleglycerol-phosphate dehydratase (195 aa).

It belongs to the imidazoleglycerol-phosphate dehydratase family.

The protein localises to the cytoplasm. The enzyme catalyses D-erythro-1-(imidazol-4-yl)glycerol 3-phosphate = 3-(imidazol-4-yl)-2-oxopropyl phosphate + H2O. It functions in the pathway amino-acid biosynthesis; L-histidine biosynthesis; L-histidine from 5-phospho-alpha-D-ribose 1-diphosphate: step 6/9. The polypeptide is Imidazoleglycerol-phosphate dehydratase (Bordetella avium (strain 197N)).